The chain runs to 404 residues: Dihydroorotase (404 aa).

Zn(2+) contacts are provided by histidine 57 and histidine 59. Substrate-binding positions include 59–61 and asparagine 91; that span reads HLR. Lysine 135, histidine 164, histidine 204, and aspartate 272 together coordinate Zn(2+). An N6-carboxylysine modification is found at lysine 135. Residue aspartate 272 is part of the active site. Residues histidine 276 and 286–287 contribute to the substrate site; that span reads AG.

The protein belongs to the metallo-dependent hydrolases superfamily. DHOase family. Class I DHOase subfamily. Zn(2+) is required as a cofactor.

The catalysed reaction is (S)-dihydroorotate + H2O = N-carbamoyl-L-aspartate + H(+). It functions in the pathway pyrimidine metabolism; UMP biosynthesis via de novo pathway; (S)-dihydroorotate from bicarbonate: step 3/3. Catalyzes the reversible cyclization of carbamoyl aspartate to dihydroorotate. The polypeptide is Dihydroorotase (Pyrococcus abyssi (strain GE5 / Orsay)).